The following is a 267-amino-acid chain: Undecaprenyl-diphosphatase (267 aa).

The next 7 membrane-spanning stretches (helical) occupy residues 1–21, 40–60, 85–105, 111–131, 190–210, 219–239, and 245–265; these read MSLFHLILVALIQGITEFLPV, GQVIDVAVHVGTLGAVVLYFW, LAMGLIVATIPTVLAGAALHF, ALRSITVIGWTMLLFGLLLWW, MLMSIPTIIASGVLLGADVAV, DGAIAAAFAFVSALLALSLMM, and VSFTPYVIYRLALGLVLLGIA.

This sequence belongs to the UppP family.

Its subcellular location is the cell inner membrane. It carries out the reaction di-trans,octa-cis-undecaprenyl diphosphate + H2O = di-trans,octa-cis-undecaprenyl phosphate + phosphate + H(+). Catalyzes the dephosphorylation of undecaprenyl diphosphate (UPP). Confers resistance to bacitracin. In Ruegeria pomeroyi (strain ATCC 700808 / DSM 15171 / DSS-3) (Silicibacter pomeroyi), this protein is Undecaprenyl-diphosphatase.